The sequence spans 196 residues: Gastrula zinc finger protein xLCGF3.1 (196 aa).

7 consecutive C2H2-type zinc fingers follow at residues 6 to 28 (FMCT…HMTH), 34 to 56 (FTCT…QTIH), 62 to 84 (FTCI…YMTH), 90 to 112 (FTCT…QTMH), 118 to 140 (LTCT…QRVH), 146 to 168 (FTCT…QTVH), and 174 to 196 (FTCT…QIVH).

It belongs to the krueppel C2H2-type zinc-finger protein family.

Its subcellular location is the nucleus. Its function is as follows. May be involved in transcriptional regulation. This chain is Gastrula zinc finger protein xLCGF3.1, found in Xenopus laevis (African clawed frog).